An 885-amino-acid polypeptide reads, in one-letter code: Conidiophore development regulator abaA (885 aa).

The span at 1-20 (MSSLFQPRPVLSSQRYSQSP) shows a compositional bias: polar residues. The tract at residues 1 to 25 (MSSLFQPRPVLSSQRYSQSPDYVDT) is disordered. The TEA DNA-binding region spans 124-217 (QKDKGGVWRR…QVVKKFFEDL (94 aa)). 2 disordered regions span residues 502–539 (KEKR…WTRR) and 817–885 (APGS…TAGW). 2 stretches are compositionally biased toward basic and acidic residues: residues 508–521 (YADG…ERAG) and 831–840 (VESHAGDHHG).

This sequence belongs to the TEC1 family.

The protein resides in the nucleus. Its function is as follows. BrlA, abaA and wetA are pivotal regulators of conidiophore development and conidium maturation. They act individually and together to regulate their own expression and that of numerous other sporulation-specific genes. BrlA, abaA and wetA act together to positively regulate the expression of the Pks1 gene cluster that mediates the biosynthesis of an anthraquinone derivative pigment that contributes to conidial pigmentation that provides protection from UV radiation, heat and cold stress. In Metarhizium robertsii (strain ARSEF 23 / ATCC MYA-3075) (Metarhizium anisopliae (strain ARSEF 23)), this protein is Conidiophore development regulator abaA.